The primary structure comprises 272 residues: Formamidopyrimidine-DNA glycosylase (272 aa).

The active-site Schiff-base intermediate with DNA is Pro2. The active-site Proton donor is Glu3. The Proton donor; for beta-elimination activity role is filled by Lys58. DNA-binding residues include His94, Arg112, and Arg153. An FPG-type zinc finger spans residues 238–272; it reads FVYDRAGEPCRVCGAPIRQIVQGQRSTYFCPNCQR. Residue Arg262 is the Proton donor; for delta-elimination activity of the active site.

Belongs to the FPG family. In terms of assembly, monomer. Zn(2+) serves as cofactor.

It catalyses the reaction Hydrolysis of DNA containing ring-opened 7-methylguanine residues, releasing 2,6-diamino-4-hydroxy-5-(N-methyl)formamidopyrimidine.. The catalysed reaction is 2'-deoxyribonucleotide-(2'-deoxyribose 5'-phosphate)-2'-deoxyribonucleotide-DNA = a 3'-end 2'-deoxyribonucleotide-(2,3-dehydro-2,3-deoxyribose 5'-phosphate)-DNA + a 5'-end 5'-phospho-2'-deoxyribonucleoside-DNA + H(+). Involved in base excision repair of DNA damaged by oxidation or by mutagenic agents. Acts as a DNA glycosylase that recognizes and removes damaged bases. Has a preference for oxidized purines, such as 7,8-dihydro-8-oxoguanine (8-oxoG). Has AP (apurinic/apyrimidinic) lyase activity and introduces nicks in the DNA strand. Cleaves the DNA backbone by beta-delta elimination to generate a single-strand break at the site of the removed base with both 3'- and 5'-phosphates. In Burkholderia mallei (strain NCTC 10229), this protein is Formamidopyrimidine-DNA glycosylase.